The following is a 441-amino-acid chain: Glutamate-1-semialdehyde 2,1-aminomutase (441 aa).

Residue Lys-276 is modified to N6-(pyridoxal phosphate)lysine.

It belongs to the class-III pyridoxal-phosphate-dependent aminotransferase family. HemL subfamily. As to quaternary structure, homodimer. Requires pyridoxal 5'-phosphate as cofactor.

The protein resides in the cytoplasm. The enzyme catalyses (S)-4-amino-5-oxopentanoate = 5-aminolevulinate. The protein operates within porphyrin-containing compound metabolism; protoporphyrin-IX biosynthesis; 5-aminolevulinate from L-glutamyl-tRNA(Glu): step 2/2. This is Glutamate-1-semialdehyde 2,1-aminomutase from Rhodococcus jostii (strain RHA1).